We begin with the raw amino-acid sequence, 1112 residues long: MGVSGLWDILEPVKRPVKLETLVNKRLAIDASIWIYQFLKAVRDKEGNQLKSSHVVGFFRRICKLLFFGIKPVFVFDGGAPSLKRQTIQKRQARRLDREENATVTANKLLALQMRHQAMLLEENNKKATALANASVQNERQMPSSMTLDNSEIKPVLNQRKNYLKPDPYQLPEMDVSFDKLGSSYDPRIMSQDELTQYVSSFTKIEDINLFDFSNIDFDSELFQSLPDTDKYSILSAARLRSRLRMGLSSEQLSEMFPNRMDFSRFQIERLKERNDLTQRLMDFTGMNEFGPSRVVSEKNREYILVKNEGAEGGWALGVISGSTNNEPIIIDDEATKLSSNLIDEDEDEAFYDVPLPSRSHSMNPRELVAAKLKEIKENSFSENQQSDEADYNVTDDLILQLATQQSLEENKKSKELFSLSASEFDKLNSEKKTFEILSTDIPAEDSMNSLLNDEENLKLEHVGDVSNDSLAFAEKKHPENGTSIFMDALPSASREKKTNDLIDPLPFQPMDWGKSIFFEKLKKPTETFMDSKTDIPSEAPDNSKLVEDTNLHTINATVNIESDLDAAKPGIENPIISPLLPVKDDEKDLDLRELNPLEPFENMKEQADDGTVTNPLNVSSDKAMSVYLLSSENAKDTGDIKSESIDAVLPTLETSSPSLSIPTDFQKEASPNKGAAALSSKVEPEVVEKLLDEEEEEMIIRMAEEEKEYDRFVSELNQRHETEEWNQEAFEKRLKELKNQKRSEKRDADEVTQVMIKECQELLRLFGLPYIVAPQEAEAQCSKLLELKLVDGIVTDDSDVFLFGGTRVYRNMFNQNKFVELYLMDDMKREFNVNQMDLIKLAHLLGSDYTMGLSRVGPVLALEILHEFPGDTGLFEFKKWFQRLSTGHASKNDVNTPVKKRINKLVGKIILPSEFPNPLVDEAYLHPAVDDSKQSFQWGIPDLDELRQFLMATVGWSKQRTNEVLLPVIQDMHKKQFVGTQSNLTQFFEGGNTNVYAPRVAYHFKSKRLENALSSFKNQISNQSPMSEEIQADADAFGESKGSDELQSRILRRKKMMASKNSSDSDSDSEDNFLASLTPKTNSSSISIENLPRKTKLSTSLLKKPSKRRRK.

The segment at 1 to 95 (MGVSGLWDIL…QTIQKRQARR (95 aa)) is N-domain. Mg(2+)-binding residues include aspartate 30 and aspartate 77. In terms of domain architecture, UIM spans 395-414 (TDDLILQLATQQSLEENKKS). Residues 742–870 (KRSEKRDADE…LALEILHEFP (129 aa)) are I-domain. Mg(2+) is bound by residues glutamate 777, glutamate 779, aspartate 798, aspartate 800, and aspartate 849. Positions 1056–1112 (KMMASKNSSDSDSDSEDNFLASLTPKTNSSSISIENLPRKTKLSTSLLKKPSKRRRK) are disordered. Positions 1079-1089 (TPKTNSSSISI) are enriched in polar residues.

It belongs to the XPG/RAD2 endonuclease family. XPG subfamily. It depends on Mg(2+) as a cofactor.

The protein resides in the nucleus. In terms of biological role, single-stranded DNA endonuclease involved in excision repair of DNA damaged with UV light, bulky adducts, or cross-linking agents. Essential for the incision step of excision-repair. The chain is DNA repair protein rad13 (rad13) from Schizosaccharomyces pombe (strain 972 / ATCC 24843) (Fission yeast).